The following is a 763-amino-acid chain: Phosphoglycerol transferase I (763 aa).

Transmembrane regions (helical) follow at residues 1–21 (MSELLSFALFLASVLIYAWKA), 26–46 (WWFAATLTVLGLFVVLNITLF), 77–97 (ILPGIGIVLGLTAVFGALGWI), and 108–128 (FGYSLLALLLALGSVDASPAF).

Belongs to the OpgB family.

Its subcellular location is the cell inner membrane. The enzyme catalyses a phosphatidylglycerol + a membrane-derived-oligosaccharide D-glucose = a 1,2-diacyl-sn-glycerol + a membrane-derived-oligosaccharide 6-(glycerophospho)-D-glucose.. It functions in the pathway glycan metabolism; osmoregulated periplasmic glucan (OPG) biosynthesis. Transfers a phosphoglycerol residue from phosphatidylglycerol to the membrane-bound nascent glucan backbones. The polypeptide is Phosphoglycerol transferase I (Escherichia coli (strain SE11)).